Reading from the N-terminus, the 573-residue chain is Sulfate adenylyltransferase (573 aa).

The N-terminal stretch occupies residues 1–169 (MANSPHGGVL…LEAVNRLQHY (169 aa)). Residues 170 to 394 (DFVELRYTPS…LRESHPPRSQ (225 aa)) are catalytic. Gln-197 contributes to the sulfate binding site. ATP-binding positions include 197 to 200 (QTRN) and 291 to 294 (GRDH). Active-site residues include Thr-198, Arg-199, and Asn-200. Arg-199 provides a ligand contact to sulfate. Ala-295 provides a ligand contact to sulfate. ATP is bound at residue Met-333. The tract at residues 395–573 (QGFTIFLTGY…LESQGLLDRF (179 aa)) is allosteric regulation domain; adenylyl-sulfate kinase-like. 3'-phosphoadenylyl sulfate is bound by residues 434–437 (ETVR), Arg-451, 477–478 (IA), and Arg-515.

This sequence in the N-terminal section; belongs to the sulfate adenylyltransferase family. In the C-terminal section; belongs to the APS kinase family. Homohexamer. Dimer of trimers.

The protein resides in the cytoplasm. The catalysed reaction is sulfate + ATP + H(+) = adenosine 5'-phosphosulfate + diphosphate. Its pathway is sulfur metabolism; hydrogen sulfide biosynthesis; sulfite from sulfate: step 1/3. Allosterically inhibited by 3'-phosphoadenosine 5'-phosphosulfate (PAPS). Functionally, catalyzes the first intracellular reaction of sulfate assimilation, forming adenosine-5'-phosphosulfate (APS) from inorganic sulfate and ATP. Plays an important role in sulfate activation as a component of the biosynthesis pathway of sulfur-containing amino acids. The protein is Sulfate adenylyltransferase of Chaetomium globosum (strain ATCC 6205 / CBS 148.51 / DSM 1962 / NBRC 6347 / NRRL 1970) (Soil fungus).